A 346-amino-acid chain; its full sequence is Dihydroorotase (346 aa).

The Zn(2+) site is built by H14 and H16. Substrate-binding positions include 16 to 18 and N42; that span reads HLR. Residues K100, H137, and H175 each contribute to the Zn(2+) site. An N6-carboxylysine modification is found at K100. Position 137 (H137) interacts with substrate. Position 220 (L220) interacts with substrate. Position 248 (D248) interacts with Zn(2+). D248 is an active-site residue. Substrate contacts are provided by H252 and A264.

The protein belongs to the metallo-dependent hydrolases superfamily. DHOase family. Class II DHOase subfamily. Homodimer. It depends on Zn(2+) as a cofactor.

It carries out the reaction (S)-dihydroorotate + H2O = N-carbamoyl-L-aspartate + H(+). It participates in pyrimidine metabolism; UMP biosynthesis via de novo pathway; (S)-dihydroorotate from bicarbonate: step 3/3. Functionally, catalyzes the reversible cyclization of carbamoyl aspartate to dihydroorotate. The protein is Dihydroorotase of Novosphingobium aromaticivorans (strain ATCC 700278 / DSM 12444 / CCUG 56034 / CIP 105152 / NBRC 16084 / F199).